Consider the following 897-residue polypeptide: Patched domain-containing protein 1 (897 aa).

The chain crosses the membrane as a helical span at residues 25–45; that stretch reads PVFFLTVPAVLTIIFGSTVLS. N-linked (GlcNAc...) asparagine glycans are attached at residues Asn-132, Asn-167, and Asn-179. The next 2 membrane-spanning stretches (helical) occupy residues 271–291 and 306–326; these read GVLA…AATI and GLLG…IFFI. The SSD domain occupies 273-433; the sequence is LAKSEVLVSL…FSFYGSCLVF (161 aa). N-linked (GlcNAc...) asparagine glycosylation is present at Asn-332. 4 helical membrane passes run 335–355, 377–397, 414–434, and 506–526; these read LLGI…ELLA, VMVC…MGAS, VAVL…LVFA, and PFVV…CLQI. N-linked (GlcNAc...) asparagine glycosylation is found at Asn-572 and Asn-603. Transmembrane regions (helical) follow at residues 701–721, 727–747, and 754–774; these read PILT…FLVI, FWLI…MTLW, and ISIL…APHL. Asn-803 carries an N-linked (GlcNAc...) asparagine glycan. 2 helical membrane passes run 806–826 and 831–851; these read CFVI…YTLF and LTAG…LTFF. Basic residues predominate over residues 856-866; sequence KRHKKKKRAKR. Residues 856–881 form a disordered region; that stretch reads KRHKKKKRAKRKEREREREREREREE. The segment covering 867 to 881 has biased composition (basic and acidic residues); the sequence is KEREREREREREREE.

This sequence belongs to the patched family.

It is found in the cell membrane. The protein localises to the cell projection. Its subcellular location is the dendritic spine. Its function is as follows. Can bind cholesterol in vitro. In Danio rerio (Zebrafish), this protein is Patched domain-containing protein 1 (ptchd1).